Consider the following 416-residue polypeptide: Adenylosuccinate synthetase (416 aa).

Residues 12–18 (GDEGKGK) and 40–42 (GHT) contribute to the GTP site. Aspartate 13 functions as the Proton acceptor in the catalytic mechanism. Mg(2+) contacts are provided by aspartate 13 and glycine 40. Residues 13–16 (DEGK), 38–41 (NAGH), threonine 125, arginine 139, glutamine 219, threonine 234, and arginine 298 contribute to the IMP site. Catalysis depends on histidine 41, which acts as the Proton donor. Residue 294 to 300 (TVTGRKR) coordinates substrate. GTP contacts are provided by residues arginine 300, 326–328 (KLD), and 404–406 (STS).

It belongs to the adenylosuccinate synthetase family. Homodimer. The cofactor is Mg(2+).

The protein resides in the cytoplasm. It carries out the reaction IMP + L-aspartate + GTP = N(6)-(1,2-dicarboxyethyl)-AMP + GDP + phosphate + 2 H(+). The protein operates within purine metabolism; AMP biosynthesis via de novo pathway; AMP from IMP: step 1/2. Plays an important role in the de novo pathway of purine nucleotide biosynthesis. Catalyzes the first committed step in the biosynthesis of AMP from IMP. The protein is Adenylosuccinate synthetase of Aliarcobacter butzleri (strain RM4018) (Arcobacter butzleri).